Here is a 199-residue protein sequence, read N- to C-terminus: Ribonuclease HII (199 aa).

One can recognise an RNase H type-2 domain in the interval Ser11 to Gly199. The a divalent metal cation site is built by Asp17, Glu18, and Asp113.

The protein belongs to the RNase HII family. Requires Mn(2+) as cofactor. The cofactor is Mg(2+).

Its subcellular location is the cytoplasm. The catalysed reaction is Endonucleolytic cleavage to 5'-phosphomonoester.. Endonuclease that specifically degrades the RNA of RNA-DNA hybrids. The chain is Ribonuclease HII from Synechococcus sp. (strain CC9902).